The primary structure comprises 104 residues: Small ribosomal subunit protein uS10 (104 aa).

Belongs to the universal ribosomal protein uS10 family. In terms of assembly, part of the 30S ribosomal subunit.

In terms of biological role, involved in the binding of tRNA to the ribosomes. The chain is Small ribosomal subunit protein uS10 from Alkaliphilus oremlandii (strain OhILAs) (Clostridium oremlandii (strain OhILAs)).